The chain runs to 469 residues: ATP synthase subunit beta (469 aa).

Residue 156–163 participates in ATP binding; that stretch reads GGAGVGKT.

It belongs to the ATPase alpha/beta chains family. As to quaternary structure, F-type ATPases have 2 components, CF(1) - the catalytic core - and CF(0) - the membrane proton channel. CF(1) has five subunits: alpha(3), beta(3), gamma(1), delta(1), epsilon(1). CF(0) has three main subunits: a(1), b(2) and c(9-12). The alpha and beta chains form an alternating ring which encloses part of the gamma chain. CF(1) is attached to CF(0) by a central stalk formed by the gamma and epsilon chains, while a peripheral stalk is formed by the delta and b chains.

The protein localises to the cell membrane. The enzyme catalyses ATP + H2O + 4 H(+)(in) = ADP + phosphate + 5 H(+)(out). Produces ATP from ADP in the presence of a proton gradient across the membrane. The catalytic sites are hosted primarily by the beta subunits. The sequence is that of ATP synthase subunit beta from Lactococcus lactis subsp. lactis (strain IL1403) (Streptococcus lactis).